Here is a 94-residue protein sequence, read N- to C-terminus: Phosphoribosyl-ATP pyrophosphatase (94 aa).

This sequence belongs to the PRA-PH family.

It is found in the cytoplasm. The enzyme catalyses 1-(5-phospho-beta-D-ribosyl)-ATP + H2O = 1-(5-phospho-beta-D-ribosyl)-5'-AMP + diphosphate + H(+). It functions in the pathway amino-acid biosynthesis; L-histidine biosynthesis; L-histidine from 5-phospho-alpha-D-ribose 1-diphosphate: step 2/9. This is Phosphoribosyl-ATP pyrophosphatase from Pyrobaculum neutrophilum (strain DSM 2338 / JCM 9278 / NBRC 100436 / V24Sta) (Thermoproteus neutrophilus).